The sequence spans 105 residues: Pyrimidine/purine nucleoside phosphorylase (105 aa).

The protein belongs to the nucleoside phosphorylase PpnP family.

It catalyses the reaction a purine D-ribonucleoside + phosphate = a purine nucleobase + alpha-D-ribose 1-phosphate. It carries out the reaction adenosine + phosphate = alpha-D-ribose 1-phosphate + adenine. The enzyme catalyses cytidine + phosphate = cytosine + alpha-D-ribose 1-phosphate. The catalysed reaction is guanosine + phosphate = alpha-D-ribose 1-phosphate + guanine. It catalyses the reaction inosine + phosphate = alpha-D-ribose 1-phosphate + hypoxanthine. It carries out the reaction thymidine + phosphate = 2-deoxy-alpha-D-ribose 1-phosphate + thymine. The enzyme catalyses uridine + phosphate = alpha-D-ribose 1-phosphate + uracil. The catalysed reaction is xanthosine + phosphate = alpha-D-ribose 1-phosphate + xanthine. In terms of biological role, catalyzes the phosphorolysis of diverse nucleosides, yielding D-ribose 1-phosphate and the respective free bases. Can use uridine, adenosine, guanosine, cytidine, thymidine, inosine and xanthosine as substrates. Also catalyzes the reverse reactions. This Ralstonia nicotianae (strain ATCC BAA-1114 / GMI1000) (Ralstonia solanacearum) protein is Pyrimidine/purine nucleoside phosphorylase.